Here is a 1026-residue protein sequence, read N- to C-terminus: MSTIVFGSFTCHLDAAIHQDNADRLAKAWTRPENRQVSNVHLLCRRAAKSLINTYESATASAWKGLEEKLQPMFAKREFSKTVTKRKGLRCFKESSEKFIEKKLKKQYKEERERFQFLNGPDAIVNQISVDKCEASVWVPFPHIIEKPSFTTPSMKKKVVFTKVRMSEASLQLFMRRVAANAKANGQKVEIIGRKRVVGHYTTKSRLTYFRTHVRHLDGSKPRYDLVLDEATKKILQLFANTSGFHHVHKKGEITPGMSGFVVNPMNLSDPMHVYDTDLFIVRGKHNSILVDSRCKVSKEQSNEIVHYSDPGKQFWDGFTNSFMQCKLRETDHQCTSDLDVKECGYVAALVCQAIIPCGKITCLQCAQKYSYMSQQEIRDRFSTVIEQHEKTVMDNYPQFSHVLAFLKRYRELMRVENQNYEAFKDITHMIGERKEAPFSHLNKINELIIKGGMMSAQDYIEASDHLRELARYQKNRTENIRSGSIKAFRNKISSKAHVNMQLMCDNQLDTNGNFVWGQREYHAKRFFRNYFDVIDVSEGYRRHIVRENPRGIRKLAIGNLVMSTNLAALRKQLLGEECIHFEVSKECTSKRGENFVYQCCCVTHEDGTPLESEIISPTKNHLVVGNSGDSKYVDLPTAKGGAMFIAKAGYCYINIFLAMLININEDEAKSFTKTVRDTIVPKLGTWPSMMDLATACHFLAVLYPETRNAELPRILVDHEAKIFHVVDSFGSLSTGMHVLKANTINQLISFASDTLDSSMKTYLVGGLEVDKCDEFKNVKLLIRSIYKPQIMEQVLKEEPYLLLMSVLSPGVLMALFNSGSLEKATQYWIARSHSLAAITAMLSALAAKVSLASTLNAQMSVIDEHAAVLCDSVFVGTKPYASYMMAVKTLERMKARTESDHTLNDLGFSVLRQATPHLVEKKLSPGVGAGLERIKLVGKVLCNLGIAAVAKTYTKTFHPERRSRFRRQVRHLRSVITWQPIQTPERRSSAEKRRRCLLHTPVDGKAILQSYRNFHKFSSKHSEDV.

The 144-residue stretch at 165–308 (RMSEASLQLF…KEQSNEIVHY (144 aa)) folds into the Peptidase S30 domain. Active-site for P1 proteinase activity residues include H216, D225, and S259. Positions 360 to 363 (KITC) match the Involved in interaction with stylet and aphid transmission motif. The Involved in virions binding and aphid transmission motif lies at 618 to 620 (PTK). Positions 644 to 766 (MFIAKAGYCY…DSSMKTYLVG (123 aa)) constitute a Peptidase C6 domain. Residues C652 and H725 each act as for helper component proteinase activity in the active site.

The protein belongs to the potyviridae P3N-PIPO polyprotein family. In terms of assembly, interacts (via PIPO domain) with host PCaP1 protein; this interaction may help to anchor the movement complex to the plasma membrane from which the complex could move to the plasmodesmata. Post-translationally, potyviral RNA is expressed as two polyproteins which undergo post-translational proteolytic processing. Genome polyprotein is processed by NIa-pro, P1 and HC-pro proteinases resulting in the production of at least ten individual proteins. P3N-PIPO is cleaved by P1 and HC-pro proteinases resulting in the production of three individual proteins. The P1 proteinase and the HC-pro cleave only their respective C-termini autocatalytically.

The protein resides in the host cell junction. It localises to the host plasmodesma. It carries out the reaction Hydrolyzes a Gly-|-Gly bond at its own C-terminus, commonly in the sequence -Tyr-Xaa-Val-Gly-|-Gly, in the processing of the potyviral polyprotein.. In terms of biological role, required for aphid transmission and also has proteolytic activity. Only cleaves a Gly-Gly dipeptide at its own C-terminus. Interacts with virions and aphid stylets. Acts as a suppressor of RNA-mediated gene silencing, also known as post-transcriptional gene silencing (PTGS), a mechanism of plant viral defense that limits the accumulation of viral RNAs. May have RNA-binding activity. Its function is as follows. Allows efficient cell to cell propagation, by bypassing the host cell wall barrier. Transports viral genome to neighboring plant cells directly through plasmosdesmata, without any budding. The protein is P3N-PIPO polyprotein of Prunus armeniaca (Apricot).